Here is a 693-residue protein sequence, read N- to C-terminus: MKGRLLDAVPLSSLTGVGAALSNKLAKINLHTVQDLLLHLPLRYEDRTHLYPIGELLPGVYATVEGEVLNCNISFGSRRMMTCQISDGSGILTMRFFNFNAAMKNSLATGRRVLAYGEAKRGKYGAEMIHPEYRVQGDLSTPELQETLTPVYPTTEGVKQATLRKLTDQALDLLDTCAIEELLPPELSQGMMTLPEALRTLHRPPPTLQLSDLETGQHPAQRRLILEELLAHNLSMLALRAGAQRFHAQPLSANDALKNKLLAALPFKPTGAQARVVAEIERDMALDVPMMRLVQGDVGSGKTLVAALAALRAVAHGKQVALMAPTELLAEQHANNFRNWFAPLGIEVGWLAGKQKGKARLAQQEAIASGQVQMIVGTHAIFQEQVQFNGLALVIIDEQHRFGVHQRLALWEKGQQQGFHPHQLIMTATPIPRTLAMTAYADLDTSVIDELPPGRTPVTTVAIPDTRRIDIIDRVRHACMTEGRQAYWVCTLIEESELLEAQAAEATWEELKLALPELNVGLVHGRMKPAEKQAVMTSFKQGELHLLVATTVIEVGVDVPNASLMIIENPERLGLAQLHQLRGRVGRGAVASHCVLLYKTPLSKTAQIRLQVLRDSNDGFVIAQKDLEIRGPGELLGTRQTGNAEFKVADLLRDQAMIPEVQRLARHIHERYPQQAKALIERWMPETERYSNA.

The wedge domain stretch occupies residues 48-146 (THLYPIGELL…GDLSTPELQE (99 aa)). One can recognise a Helicase ATP-binding domain in the interval 283–448 (DMALDVPMMR…AYADLDTSVI (166 aa)). Residue 296–303 (GDVGSGKT) coordinates ATP. The short motif at 397 to 400 (DEQH) is the DEAH box element. The Helicase C-terminal domain maps to 482–628 (EGRQAYWVCT…GFVIAQKDLE (147 aa)).

This sequence belongs to the helicase family. RecG subfamily. As to quaternary structure, monomer.

It carries out the reaction Couples ATP hydrolysis with the unwinding of duplex DNA by translocating in the 3'-5' direction.. It catalyses the reaction ATP + H2O = ADP + phosphate + H(+). Plays a critical role in recombination and DNA repair. Helps process Holliday junction intermediates to mature products by catalyzing branch migration. Has replication fork regression activity, unwinds stalled or blocked replication forks to make a HJ that can be resolved. Has a DNA unwinding activity characteristic of a DNA helicase with 3'-5' polarity. In terms of biological role, plays a role in recovery after DNA ADP-ribosylation. This is ATP-dependent DNA helicase RecG from Escherichia coli O127:H6 (strain E2348/69 / EPEC).